The following is a 495-amino-acid chain: Taxoid 2-alpha-hydroxylase (495 aa).

The helical transmembrane segment at 17-37 (LQSSAILLTVVSGIIVIVILL) threads the bilayer. Cys441 contributes to the heme binding site.

This sequence belongs to the cytochrome P450 family.

The protein resides in the microsome membrane. It catalyses the reaction taxusin + reduced [NADPH--hemoprotein reductase] + O2 = 2alpha-hydroxytaxusin + oxidized [NADPH--hemoprotein reductase] + H2O + H(+). The enzyme catalyses 7beta-hydroxytaxusin + reduced [NADPH--hemoprotein reductase] + O2 = 2alpha,7beta-dihydroxytaxusin + oxidized [NADPH--hemoprotein reductase] + H2O + H(+). The protein operates within alkaloid biosynthesis; taxol biosynthesis. Catalyzes the conversion of taxusin to 2-alpha-hydroxytaxusin in taxol biosynthesis. Catalyzes the conversion of 7-beta-hydroxytaxusin to 2-alpha-7-beta-hydroxytaxusin in taxol biosynthesis. The polypeptide is Taxoid 2-alpha-hydroxylase (Taxus canadensis (Canadian yew)).